A 96-amino-acid polypeptide reads, in one-letter code: uncharacterized protein (96 aa).

It is found in the mitochondrion. This is an uncharacterized protein from Schizosaccharomyces pombe (strain 972 / ATCC 24843) (Fission yeast).